The chain runs to 65 residues: Adrenergic toxin rho-elapitoxin-Dp1b (65 aa).

4 cysteine pairs are disulfide-bonded: Cys3-Cys24, Cys17-Cys42, Cys46-Cys57, and Cys58-Cys63.

This sequence belongs to the three-finger toxin family. Short-chain subfamily. Aminergic toxin sub-subfamily. In terms of tissue distribution, expressed by the venom gland.

The protein localises to the secreted. In terms of biological role, highly potent on various alpha-adrenoceptors (ADRA) (subnanomolar affinity for ADRA1A). Order of potency is the following: ADRA1A (Ki=0.37 nM) &gt; ADRA1B (Ki=10.47 nM) &gt; ADRA1D (Ki=104.71 nM) &gt; ADRA2C (Ki=165.96 nM). Were also found to reversibly bind to muscarinic acetylcholine receptors (CHRM), but the affinity is much weaker (CHRM1, Ki=1778.28 nM; CHRM4, Ki=4466.84 nM; CHRM2, Ki=17782.79 nM). In Dendroaspis polylepis polylepis (Black mamba), this protein is Adrenergic toxin rho-elapitoxin-Dp1b.